Reading from the N-terminus, the 346-residue chain is Golgi to ER traffic protein 4 (346 aa).

Residues 317-346 (GQNQGGSRRTPQGRSQSKTVEAPPASMELD) form a disordered region. Residues 321–335 (GGSRRTPQGRSQSKT) show a composition bias toward polar residues.

Belongs to the GET4 family. Component of the get4/get5/sgt2 sorting complex.

It is found in the cytoplasm. Component of the get4/get5/sgt2 sorting complex involved in the GET (guided entry of TA proteins) pathway that leads to the insertion of tail-anchored (TA) proteins into the endoplasmic reticulum. Get4 and get5 form an obligate complex that catalyzes the transfer of tail-anchored proteins destined to the endoplasmic reticulum from sgt2 to the cytosolic targeting factor which then targets the TA protein to the ER membrane via get1/get2. The polypeptide is Golgi to ER traffic protein 4 (Aspergillus fumigatus (strain ATCC MYA-4609 / CBS 101355 / FGSC A1100 / Af293) (Neosartorya fumigata)).